The chain runs to 514 residues: Myocyte-specific enhancer factor 2D (514 aa).

One can recognise an MADS-box domain in the interval 3–57; the sequence is RKKIQIQRITDERNRQVTFTKRKFGLMKKAYELSVLCDCEIALIIFNHSNKLFQY. The mef2-type DNA-binding region spans 58 to 86; sequence ASTDMDKVLLKYTEYNEPHESRTNADIIE. Phosphoserine is present on residues Asp-97, Ser-98, and Ser-106. Leu-107 carries the phosphothreonine modification. Ser-110 carries the post-translational modification Phosphoserine. Residue Ser-121 is modified to Phosphoserine; by PKA. The tract at residues 174–207 is disordered; sequence TDPRLLSPQQPALQRNSVSPGLPQRPASAGAMLG. Phosphoserine; by MAPK7 is present on Ser-180. Over residues 180-192 the composition is skewed to polar residues; it reads SPQQPALQRNSVS. The residue at position 190 (Ser-190) is a Phosphoserine; by PKA. At Ser-231 the chain carries Phosphoserine. The disordered stretch occupies residues 244 to 269; sequence NKVIPAKSPPPPTHNTQLGAPSRKPD. The residue at position 245 (Lys-245) is an N6-acetyllysine. Ser-251 bears the Phosphoserine mark. The interval 286 to 292 is beta domain; that stretch reads TEDHLDL. Disordered regions lie at residues 364–399 and 430–514; these read WQQP…QQPH and SIKS…WTLK. Positions 367 to 396 are enriched in pro residues; sequence PQPPQQPQPPQPPQSQPQPPQPQPQQPPQQ. An N6-acetyllysine; alternate modification is found at Lys-432. Lys-432 is covalently cross-linked (Glycyl lysine isopeptide (Lys-Gly) (interchain with G-Cter in SUMO); alternate). At Ser-437 the chain carries Phosphoserine.

It belongs to the MEF2 family. In terms of assembly, forms a complex with class II HDACs in undifferentiating cells. On myogenic differentiation, HDACs are released into the cytoplasm allowing MEF2s to interact with other proteins for activation. Interacts with HDAC4 (in undifferentiating cells); the interaction translocates MEF2D to nuclear dots. Forms a heterodimer with MEF2A. Interacts with MAPK7; the interaction phosphorylates but does not activate MEF2D. Interacts with MYOG. Interacts with CCAR2 and HDAC3. In terms of processing, phosphorylated on Ser-437 is which is required for Lys-432 sumoylation and inhibits transcriptional activity. Phosphorylation on this residue by CDK5 is dependent on p35 and calpains. Phosphorylated by PKA at Ser-121 and Ser-190 represses transcriptional activity in embryonic and postnatal skeletal muscle, and stabilizes protein levels. No in vitro phosphorylation by PKA on Thr-20. Phosphorylated and activated by CaMK4. Acetylated on Lys-432 by CREBBP. Acetylated by EP300. Deacetylated by SIRT1 and HDAC3. Post-translationally, sumoylated on Lys-432 with SUMO2 but not SUMO1; which inhibits transcriptional activity and myogenic activity. Desumoylated by SENP3. In terms of processing, proteolytically cleaved in cerebellar granule neurons by caspase 7 following neurotoxicity. Preferentially cleaves the CDK5-mediated hyperphosphorylated form which leads to neuron apoptosis and transcriptional inactivation. In terms of tissue distribution, widely expressed though mainly restricted to skeletal and cardiac muscle, brain, neurons and lymphocytes. Differentially expressed depending on if isoforms contain the beta domain or not, with the total expression of the beta domain-lacking isoforms vastly exceeding that of the beta domain-containing isoforms. Isoforms containing the beta domain are expressed primarily in skeletal and cardiac muscle and in brain. Also present in lung and testis. Splicing to include the beta domain is induced in differentiating myocytes. Isoforms lacking the beta domain are expressed less abundantly in skeletal muscle, brain and lymphocytes, and are uniquely found in ovary, liver, spleen and kidney. In embryos, the beta domain-containing and beta domain-lacking isoforms are equally expressed. Also expressed cerebellar granule neurons and other regions of the CNS. Highest levels in the olfactory bulb, cortex, hippocampus, thalamus and cerebellum.

It localises to the nucleus. Functionally, transcriptional activator which binds specifically to the MEF2 element, 5'-YTA[AT](4)TAR-3', found in numerous muscle-specific, growth factor- and stress-induced genes. Mediates cellular functions not only in skeletal and cardiac muscle development, but also in neuronal differentiation and survival. Plays diverse roles in the control of cell growth, survival and apoptosis via p38 MAPK signaling in muscle-specific and/or growth factor-related transcription. Plays a critical role in the regulation of neuronal apoptosis. This Mus musculus (Mouse) protein is Myocyte-specific enhancer factor 2D (Mef2d).